The chain runs to 1179 residues: RecBCD enzyme subunit RecB (1179 aa).

A DNA-binding and helicase activity, interacts with RecC region spans residues 1–859; the sequence is MVYSDTKTSK…IIQNGKCMNY (859 aa). The region spanning 18 to 459 is the UvrD-like helicase ATP-binding domain; the sequence is NIMKKKLNIF…YYLDTNWRSS (442 aa). 39 to 46 serves as a coordination point for ATP; it reads ASAGTGKT. Residues 485-755 enclose the UvrD-like helicase C-terminal domain; it reads EPILSSSKNL…RIITIHKSKG (271 aa). Residues 910–1179 form a nuclease activity, interacts with RecD and RecA region; it reads YSQITSFTKI…KLTKLILQKK (270 aa). 3 residues coordinate Mg(2+): His-962, Asp-1073, and Asp-1086. Residue Asp-1086 is the For nuclease activity of the active site.

Belongs to the helicase family. UvrD subfamily. In terms of assembly, heterotrimer of RecB, RecC and RecD. All subunits contribute to DNA-binding. Interacts with RecA. Requires Mg(2+) as cofactor.

The catalysed reaction is Exonucleolytic cleavage (in the presence of ATP) in either 5'- to 3'- or 3'- to 5'-direction to yield 5'-phosphooligonucleotides.. It catalyses the reaction Couples ATP hydrolysis with the unwinding of duplex DNA by translocating in the 3'-5' direction.. It carries out the reaction ATP + H2O = ADP + phosphate + H(+). Functionally, a helicase/nuclease that prepares dsDNA breaks (DSB) for recombinational DNA repair. Binds to DSBs and unwinds DNA via a highly rapid and processive ATP-dependent bidirectional helicase activity. Unwinds dsDNA until it encounters a Chi (crossover hotspot instigator) sequence from the 3' direction. Cuts ssDNA a few nucleotides 3' to the Chi site. The properties and activities of the enzyme are changed at Chi. The Chi-altered holoenzyme produces a long 3'-ssDNA overhang and facilitates RecA-binding to the ssDNA for homologous DNA recombination and repair. Holoenzyme degrades any linearized DNA that is unable to undergo homologous recombination. In the holoenzyme this subunit contributes ATPase, 3'-5' helicase, exonuclease activity and loads RecA onto ssDNA. This Buchnera aphidicola subsp. Schizaphis graminum (strain Sg) protein is RecBCD enzyme subunit RecB.